A 143-amino-acid polypeptide reads, in one-letter code: Large ribosomal subunit protein uL15 (143 aa).

The disordered stretch occupies residues 1–52 (MKLNTLAPAAGSKSAPKRLGRGIGSGLGKTSGKGHKGQKARSGGYHKVGFEG). Gly residues predominate over residues 21 to 31 (RGIGSGLGKTS).

Belongs to the universal ribosomal protein uL15 family. As to quaternary structure, part of the 50S ribosomal subunit.

Its function is as follows. Binds to the 23S rRNA. The polypeptide is Large ribosomal subunit protein uL15 (Francisella tularensis subsp. holarctica (strain FTNF002-00 / FTA)).